The chain runs to 115 residues: Iron-sulfur cluster insertion protein ErpA (115 aa).

Iron-sulfur cluster contacts are provided by C43, C107, and C109.

This sequence belongs to the HesB/IscA family. As to quaternary structure, homodimer. Requires iron-sulfur cluster as cofactor.

Its function is as follows. Required for insertion of 4Fe-4S clusters for at least IspG. The sequence is that of Iron-sulfur cluster insertion protein ErpA from Buchnera aphidicola subsp. Baizongia pistaciae (strain Bp).